We begin with the raw amino-acid sequence, 2442 residues long: Histone lysine acetyltransferase CREBBP (2442 aa).

2 disordered regions span residues 1–40 (MAENLLDGPPNPKRAKLSSPGFSANDSTDFGSLFDLENDL) and 74–168 (RGGS…PATS). A2 is modified (N-acetylalanine). The span at 20 to 30 (PGFSANDSTDF) shows a compositional bias: polar residues. S120 bears the Phosphoserine mark. The segment covering 125 to 168 (GDSSTPSLPKQAASTSGPTPPASQALNPQAQKQVGLVTSSPATS) has biased composition (polar residues). Omega-N-methylarginine is present on R219. An interaction with SRCAP region spans residues 226 to 409 (PAPAMQGATS…GKACQVAHCA (184 aa)). Low complexity predominate over residues 261–272 (GGMTKMGMTGNT). Residues 261–290 (GGMTKMGMTGNTSPFGQPFSQTGGQPMGAT) are disordered. Residues 273–284 (SPFGQPFSQTGG) are compositionally biased toward polar residues. The TAZ-type 1 zinc-finger motif lies at 346–432 (DPEKRKLIQQ…RHDCPVCLPL (87 aa)). Residues H362, C366, C379, C384, H393, C397, C403, C408, H417, C421, C426, and C429 each contribute to the Zn(2+) site. The KIX domain occupies 586–665 (GVRKGWHEHV…KIYKIQKELE (80 aa)). An asymmetric dimethylarginine mark is found at R600 and R624. Residue K656 is modified to N6-acetyllysine. Over residues 792 to 825 (FLPQNQFPSSSGAMSVNSVGMGQPATQAGVSQGQ) the composition is skewed to polar residues. The segment at 792 to 1084 (FLPQNQFPSS…STSPSQPRKK (293 aa)) is disordered. Composition is skewed to pro residues over residues 846–862 (PCPPVTQSPLHPTPPPA) and 874–887 (PTPPGMTPPQPAAP). Residues 894-906 (VSSGQTPTPTPGS) show a composition bias toward polar residues. 2 stretches are compositionally biased toward low complexity: residues 909–930 (SAAQTQSTPTVQAAAQAQVTPQ) and 938–957 (PSVATPQSSQQQPTPVHTQP). Residues 974–989 (PTPSSVTSAETSSQQP) show a composition bias toward polar residues. A Glycyl lysine isopeptide (Lys-Gly) (interchain with G-Cter in SUMO1) cross-link involves residue K999. A compositionally biased stretch (basic and acidic residues) spans 1012–1022 (AESKGEPRSEM). K1015 carries the post-translational modification N6-acetyllysine. S1031 is modified (phosphoserine). Basic and acidic residues predominate over residues 1033–1060 (VKEETDTTEQKSEPMEVEEKKPEVKVEA). Residues K1034 and K1057 each participate in a glycyl lysine isopeptide (Lys-Gly) (interchain with G-Cter in SUMO1) cross-link. The segment covering 1067–1080 (SANGTASQSTSPSQ) has biased composition (polar residues). A Phosphoserine modification is found at S1077. A Bromo domain is found at 1086-1193 (FKPEELRQAL…EVFEQEIDPV (108 aa)). The interaction with histone stretch occupies residues 1125–1171 (DYFDIVKNPMDLSTIKRKLDTGQYQEPWQYVDDVWLMFNNAWLYNRK). The segment at 1163 to 1181 (NNAWLYNRKTSRVYKFCSK) is interaction with ASF1A. An N6-acetyllysine modification is found at K1217. The region spanning 1324–1701 (KFSAKRLQTT…MLVELHTQGQ (378 aa)) is the CBP/p300-type HAT domain. S1383 and S1387 each carry phosphoserine; by IKKA. The interval 1434–1436 (YLD) is interaction with histone. Acetyl-CoA contacts are provided by residues 1435–1437 (LDS), 1447–1448 (RT), I1494, R1499, and W1503. Positions 1548–1575 (NVLEESIKELEQEEEERKKEESTAASET) form a coiled coil. Residues 1557-1569 (LEQEEEERKKEES) show a composition bias toward basic and acidic residues. Residues 1557-1616 (LEQEEEERKKEESTAASETPEGSQGDSKNAKKKNNKKTNKNKSSISRANKKKPSMPNVSN) form a disordered region. Residues K1584, K1592, K1593, K1596, and K1598 each carry the N6-acetyllysine modification. Residues 1586–1596 (AKKKNNKKTNK) show a composition bias toward basic residues. The ZZ-type zinc-finger motif lies at 1703–1751 (RFVYTCNECKHHVETRWHCTVCEDYDLCINCYNTKSHTHKMVKWGLGLD). Residues C1708, C1711, C1721, C1724, C1730, C1733, H1739, and H1741 each coordinate Zn(2+). N6-acetyllysine occurs at positions 1742 and 1745. S1764 is modified (phosphoserine). A TAZ-type 2 zinc finger spans residues 1766–1847 (QESRRLSIQR…KCPVPFCLNI (82 aa)). Positions 1875–1960 (TRNVPQQSLP…QPPPAAVEAA (86 aa)) are disordered. Pro residues-rich tracts occupy residues 1901–1913 (PQTPQPPAQPQPS) and 1944–1955 (PAPPPPAQPPPA). Phosphoserine is present on residues S2064, S2077, and S2080. The tract at residues 2112-2421 (NQPGMQPQPG…LNTPNRSALS (310 aa)) is disordered. 4 stretches are compositionally biased toward low complexity: residues 2113 to 2138 (QPGMQPQPGLQSQPGMQPQPGMHQQP), 2197 to 2217 (QLLQHQQQQQQQQQQQQQQQQ), 2261 to 2280 (MGQMAAPMGQLGQMGQPGLG), and 2287 to 2305 (IQQALQQRILQQQQMKQQI). Composition is skewed to polar residues over residues 2315 to 2327 (SPQQHMLSGQPQA) and 2334 to 2343 (QIATSLSNQV). Residues 2349–2372 (VQSPRPQSQPPHSSPSPRIQPQPS) show a composition bias toward pro residues. Phosphoserine is present on S2351. Over residues 2411 to 2421 (QLNTPNRSALS) the composition is skewed to polar residues.

In terms of assembly, part of a complex composed of MSX3, CREBBP/CBP AND EP300/p300; the interaction with MSX3 decreases histone acetylation activity. Found in a complex containing NCOA2; NCOA3; IKKA; IKKB and IKBKG. Probably part of a complex with HIF1A and EP300. Interacts with phosphorylated CREB1. Interacts with the C-terminal region of CITED4. The TAZ-type 1 domain interacts with HIF1A. Interacts with SRCAP, CARM1, ELF3, MLLT7/FOXO4, N4BP2, NCOA1, NCOA3, NCOA6, PCAF, DDX5, DDX17, PELP1, PML, SMAD1, SMAD2, SMAD3, SPIB, TRERF1 and ZCCHC12. Interacts with KLF1; the interaction results in acetylation and enhancement of transcriptional activity of KLF1. Interacts with DAXX; the interaction is dependent on CBP sumoylation and results in suppression of the transcriptional activity via recruitment of HDAC2 to DAXX. Interacts with MAF. Interacts with MTDH. Interacts with MAFG; the interaction acetylates MAFG in the basic region and stimulates NFE2 transcriptional activity through increasing its DNA-binding activity. Interacts with IRF2; the interaction acetylates IRF2 and regulates its activity on the H4 promoter. Interacts (via N-terminus) with SS18L1/CREST (via C-terminus). Interacts with IRF3 (when phosphorylated); forming the dsRNA-activated factor 1 (DRAF1), a complex which activates the transcription of the type I interferon genes. Interacts with MECOM. Interacts with CITED1 (via C-terminus) Interacts with GATA1; the interaction results in acetylation and enhancement of transcriptional activity of GATA1. Interacts with FOXO1; the interaction acetylates FOXO1 and inhibits its transcriptional activity. Interacts with NPAS2, CLOCK and BMAL1. Interacts with ASF1A and ASF1B; this promotes histone acetylation. Interacts with acetylated TP53/p53 and with the acetylated histones H3 and H4. Interacts (via transactivation domain and C-terminus) with PCNA; the interaction occurs on chromatin in UV-irradiated damaged cells. Interacts with DHX9 (via N-terminus); this interaction mediates association with RNA polymerase II holoenzyme and stimulates CREB-dependent transcriptional activation. Interacts with SMAD4; negatively regulated by ZBTB7A. Forms a complex with KMT2A and CREB1. Interacts with DDX3X; this interaction may facilitate HNF4A acetylation. Interacts with MSX1; the interaction may inhibit MSX1 autoinactivation. Interacts with MSX3. Interacts with ACSS2. Post-translationally, methylation of the KIX domain by CARM1 blocks association with CREB. This results in the blockade of CREB signaling, and in activation of apoptotic response. Phosphorylated by CHUK/IKKA at Ser-1383 and Ser-1387; these phosphorylations promote cell growth by switching the binding preference of CREBBP from TP53 to NF-kappa-B. In terms of processing, sumoylation negatively regulates transcriptional activity via the recruitment of DAAX. Post-translationally, autoacetylation is required for binding to protein substrates, such as acetylated histones and acetylated TP53/p53. Autoacetylation is induced by glucose and fatty acids. As to expression, expressed in hypothalamus and cortex.

The protein localises to the cytoplasm. Its subcellular location is the nucleus. It carries out the reaction L-lysyl-[histone] + acetyl-CoA = N(6)-acetyl-L-lysyl-[histone] + CoA + H(+). It catalyses the reaction L-lysyl-[protein] + acetyl-CoA = N(6)-acetyl-L-lysyl-[protein] + CoA + H(+). The enzyme catalyses (S)-lactoyl-CoA + L-lysyl-[protein] = N(6)-[(S)-lactoyl]-L-lysyl-[protein] + CoA + H(+). In terms of biological role, acetylates histones, giving a specific tag for transcriptional activation. Mediates acetylation of histone H3 at 'Lys-18' and 'Lys-27' (H3K18ac and H3K27ac, respectively). Also acetylates non-histone proteins, like DDX21, FBL, IRF2, MAFG, NCOA3, POLR1E/PAF53 and FOXO1. Binds specifically to phosphorylated CREB and enhances its transcriptional activity toward cAMP-responsive genes. Acts as a coactivator of ALX1. Acts as a circadian transcriptional coactivator which enhances the activity of the circadian transcriptional activators: NPAS2-BMAL1 and CLOCK-BMAL1 heterodimers. Acetylates PCNA; acetylation promotes removal of chromatin-bound PCNA and its degradation during nucleotide excision repair (NER). Acetylates POLR1E/PAF53, leading to decreased association of RNA polymerase I with the rDNA promoter region and coding region. Acetylates DDX21, thereby inhibiting DDX21 helicase activity. Acetylates FBL, preventing methylation of 'Gln-105' of histone H2A (H2AQ104me). In addition to protein acetyltransferase, can use different acyl-CoA substrates, such as lactoyl-CoA, and is able to mediate protein lactylation. Catalyzes lactylation of MRE11 in response to DNA damage, thereby promoting DNA double-strand breaks (DSBs) via homologous recombination (HR). Functions as a transcriptional coactivator for SMAD4 in the TGF-beta signaling pathway. This is Histone lysine acetyltransferase CREBBP (Crebbp) from Rattus norvegicus (Rat).